We begin with the raw amino-acid sequence, 38 residues long: Large ribosomal subunit protein bL36 (38 aa).

Belongs to the bacterial ribosomal protein bL36 family.

In Chlorobium phaeobacteroides (strain BS1), this protein is Large ribosomal subunit protein bL36.